The following is a 102-amino-acid chain: Integration host factor subunit beta (102 aa).

The protein belongs to the bacterial histone-like protein family. Heterodimer of an alpha and a beta chain.

Functionally, this protein is one of the two subunits of integration host factor, a specific DNA-binding protein that functions in genetic recombination as well as in transcriptional and translational control. This Rhodopseudomonas palustris (strain BisA53) protein is Integration host factor subunit beta.